We begin with the raw amino-acid sequence, 207 residues long: Probable nicotinate-nucleotide adenylyltransferase (207 aa).

The protein belongs to the NadD family.

It carries out the reaction nicotinate beta-D-ribonucleotide + ATP + H(+) = deamido-NAD(+) + diphosphate. It functions in the pathway cofactor biosynthesis; NAD(+) biosynthesis; deamido-NAD(+) from nicotinate D-ribonucleotide: step 1/1. Catalyzes the reversible adenylation of nicotinate mononucleotide (NaMN) to nicotinic acid adenine dinucleotide (NaAD). The protein is Probable nicotinate-nucleotide adenylyltransferase of Desulfitobacterium hafniense (strain DSM 10664 / DCB-2).